The primary structure comprises 359 residues: 3-dehydroquinate synthase (359 aa).

NAD(+) is bound by residues 71 to 76 (DGEQFK), 105 to 109 (GVIGD), 129 to 130 (TT), K142, K151, and 169 to 172 (CLQT). Zn(2+)-binding residues include E184, H247, and H264.

It belongs to the sugar phosphate cyclases superfamily. Dehydroquinate synthase family. NAD(+) is required as a cofactor. Requires Co(2+) as cofactor. It depends on Zn(2+) as a cofactor.

Its subcellular location is the cytoplasm. The catalysed reaction is 7-phospho-2-dehydro-3-deoxy-D-arabino-heptonate = 3-dehydroquinate + phosphate. It functions in the pathway metabolic intermediate biosynthesis; chorismate biosynthesis; chorismate from D-erythrose 4-phosphate and phosphoenolpyruvate: step 2/7. Functionally, catalyzes the conversion of 3-deoxy-D-arabino-heptulosonate 7-phosphate (DAHP) to dehydroquinate (DHQ). This Shewanella oneidensis (strain ATCC 700550 / JCM 31522 / CIP 106686 / LMG 19005 / NCIMB 14063 / MR-1) protein is 3-dehydroquinate synthase.